A 148-amino-acid polypeptide reads, in one-letter code: Putative adenylate kinase (148 aa).

ATP-binding residues include Gly-9, Gly-11, Lys-12, Ser-13, and Thr-14. The NMP stretch occupies residues 28-44 (EGNALAVKYGCLSGDEV). Positions 91–101 (DRGYSPEKIDE) are LID. An ATP-binding site is contributed by Arg-92.

This sequence belongs to the adenylate kinase family. AK6 subfamily. Interacts with uS11. Not a structural component of 40S pre-ribosomes, but transiently interacts with them by binding to uS11.

It catalyses the reaction AMP + ATP = 2 ADP. The enzyme catalyses ATP + H2O = ADP + phosphate + H(+). Functionally, broad-specificity nucleoside monophosphate (NMP) kinase that catalyzes the reversible transfer of the terminal phosphate group between nucleoside triphosphates and monophosphates. Also has ATPase activity. Involved in the late maturation steps of the 30S ribosomal particles, specifically 16S rRNA maturation. While NMP activity is not required for ribosome maturation, ATPase activity is. Associates transiently with small ribosomal subunit protein uS11. ATP hydrolysis breaks the interaction with uS11. May temporarily remove uS11 from the ribosome to enable a conformational change of the ribosomal RNA that is needed for the final maturation step of the small ribosomal subunit. The sequence is that of Putative adenylate kinase from Thermoplasma acidophilum (strain ATCC 25905 / DSM 1728 / JCM 9062 / NBRC 15155 / AMRC-C165).